We begin with the raw amino-acid sequence, 60 residues long: Cytotoxin 2 (60 aa).

4 disulfide bridges follow: Cys3–Cys21, Cys14–Cys38, Cys42–Cys53, and Cys54–Cys59.

Belongs to the three-finger toxin family. Short-chain subfamily. Type IA cytotoxin sub-subfamily. As to quaternary structure, monomer in solution; Homodimer and oligomer in the presence of negatively charged lipids forming a pore with a size ranging between 20 and 30 Angstroms. In terms of tissue distribution, expressed by the venom gland.

It localises to the secreted. Its subcellular location is the target cell membrane. Functionally, shows cytolytic activity on many different cells by forming pore in lipid membranes. In vivo, increases heart rate or kills the animal by cardiac arrest. In addition, it binds to heparin with high affinity, interacts with Kv channel-interacting protein 1 (KCNIP1) in a calcium-independent manner, and binds to integrin alpha-V/beta-3 (ITGAV/ITGB3) with moderate affinity. The chain is Cytotoxin 2 from Naja annulifera (Banded Egyptian cobra).